We begin with the raw amino-acid sequence, 846 residues long: FNIP repeat-containing protein DDB_G0289381 (846 aa).

The segment covering 1-11 (MKLLSFKKKPS) has biased composition (basic residues). Positions 1–39 (MKLLSFKKKPSLTKSQSCPDKLKNLKEQQKDPKNGANYD) are disordered. Basic and acidic residues predominate over residues 20 to 33 (DKLKNLKEQQKDPK). FNIP repeat units lie at residues 159 to 193 (IPNHIEKLIFSNEFDKPIKAGTIPQSVVEIEFGEK), 194 to 239 (FNQV…FGNN), 240 to 283 (FDQI…FQEN), and 284 to 325 (FNQP…YGGD). The tract at residues 362–384 (SSISLDISGGGSGSGSGVNSTTT) is disordered. FNIP repeat units follow at residues 458–500 (FQQL…FGDG), 501–546 (FNQQ…FGKS), and 654–693 (FNQSIKNLPENLTSLSLGTSFSQNLINLPNSLIELKMFNK). Residues 702-734 (SNNNNENNNENNNENNNENNNENNNENNNNTNS) form a disordered region. Residues 702–734 (SNNNNENNNENNNENNNENNNENNNENNNNTNS) are a coiled coil.

In Dictyostelium discoideum (Social amoeba), this protein is FNIP repeat-containing protein DDB_G0289381.